Here is a 260-residue protein sequence, read N- to C-terminus: MNIEALNNFKQSGEKITCLTAYDASFASVFDVCGIDIILIGDSLGNVIQGGENTLNVSMDDMVYHTKAVTKGAQNALRISDMPYQSYTNSEQALTNAKLLIIAGAQMVKFEGGCEHEASFKIFQNNDIPVCGHLGLQPQSVIEMGGYKTEGRDKQSADKIIKDALALASWGVKVIVLECIPANLAKQVSQSLSIPTIGIGAGVNCDGQILVSYDMLGIHVGYVPKFVKNFLIDSGDIKSAVNAFIEAVKDKSFPGEQHSY.

The Mg(2+) site is built by aspartate 42 and aspartate 81. Residues 42–43 (DS), aspartate 81, and lysine 109 contribute to the 3-methyl-2-oxobutanoate site. Glutamate 111 contributes to the Mg(2+) binding site. The active-site Proton acceptor is glutamate 178.

Belongs to the PanB family. Homodecamer; pentamer of dimers. It depends on Mg(2+) as a cofactor.

Its subcellular location is the cytoplasm. It catalyses the reaction 3-methyl-2-oxobutanoate + (6R)-5,10-methylene-5,6,7,8-tetrahydrofolate + H2O = 2-dehydropantoate + (6S)-5,6,7,8-tetrahydrofolate. It participates in cofactor biosynthesis; (R)-pantothenate biosynthesis; (R)-pantoate from 3-methyl-2-oxobutanoate: step 1/2. Functionally, catalyzes the reversible reaction in which hydroxymethyl group from 5,10-methylenetetrahydrofolate is transferred onto alpha-ketoisovalerate to form ketopantoate. The protein is 3-methyl-2-oxobutanoate hydroxymethyltransferase of Ruthia magnifica subsp. Calyptogena magnifica.